A 239-amino-acid chain; its full sequence is Exosome complex component Rrp4 (239 aa).

Residues glycine 67–leucine 139 form the S1 motif domain. Positions glutamine 151–glutamate 217 constitute a KH domain.

The protein belongs to the RRP4 family. As to quaternary structure, component of the archaeal exosome complex. Forms a trimer of Rrp4 and/or Csl4 subunits. The trimer associates with a hexameric ring-like arrangement composed of 3 Rrp41-Rrp42 heterodimers.

It localises to the cytoplasm. Functionally, non-catalytic component of the exosome, which is a complex involved in RNA degradation. Increases the RNA binding and the efficiency of RNA degradation. Confers strong poly(A) specificity to the exosome. In Methanopyrus kandleri (strain AV19 / DSM 6324 / JCM 9639 / NBRC 100938), this protein is Exosome complex component Rrp4.